The chain runs to 727 residues: Glycerol-3-phosphate dehydrogenase, mitochondrial (727 aa).

A mitochondrion-targeting transit peptide spans 1–42; it reads MAFQKVVKGTILMGGGALATVLGLSQFAHYRRKQVSLAYVEA. 71–99 is an FAD binding site; it reads DILVIGGGATGCGCALDAVTRGLKTALVE. The residue at position 601 (Tyr-601) is a Phosphotyrosine. EF-hand domains are found at residues 623 to 658 and 659 to 694; these read PDID…INVQ and MDED…VHTG. Asp-672, Asn-674, Asn-676, Gln-678, and Glu-683 together coordinate Ca(2+).

This sequence belongs to the FAD-dependent glycerol-3-phosphate dehydrogenase family. FAD serves as cofactor.

The protein localises to the mitochondrion. The catalysed reaction is a quinone + sn-glycerol 3-phosphate = dihydroxyacetone phosphate + a quinol. It functions in the pathway polyol metabolism; glycerol degradation via glycerol kinase pathway; glycerone phosphate from sn-glycerol 3-phosphate (anaerobic route): step 1/1. With respect to regulation, calcium-binding enhance the activity of the enzyme. Its function is as follows. Calcium-responsive mitochondrial glycerol-3-phosphate dehydrogenase which seems to be a key component of the pancreatic beta-cell glucose-sensing device. The chain is Glycerol-3-phosphate dehydrogenase, mitochondrial from Rattus norvegicus (Rat).